The following is a 234-amino-acid chain: Glucosamine-6-phosphate deaminase (234 aa).

Catalysis depends on D62, which acts as the Proton acceptor; for enolization step. N128 acts as the For ring-opening step in catalysis. The active-site Proton acceptor; for ring-opening step is H130. The active-site For ring-opening step is E135.

The protein belongs to the glucosamine/galactosamine-6-phosphate isomerase family. NagB subfamily.

The enzyme catalyses alpha-D-glucosamine 6-phosphate + H2O = beta-D-fructose 6-phosphate + NH4(+). It participates in amino-sugar metabolism; N-acetylneuraminate degradation; D-fructose 6-phosphate from N-acetylneuraminate: step 5/5. Catalyzes the reversible isomerization-deamination of glucosamine 6-phosphate (GlcN6P) to form fructose 6-phosphate (Fru6P) and ammonium ion. This chain is Glucosamine-6-phosphate deaminase, found in Streptococcus pyogenes serotype M1.